Here is a 201-residue protein sequence, read N- to C-terminus: Glycerol-3-phosphate acyltransferase (201 aa).

The next 4 membrane-spanning stretches (helical) occupy residues isoleucine 4–leucine 24, glutamate 84–phenylalanine 104, valine 116–alanine 136, and alanine 157–valine 177.

The protein belongs to the PlsY family. As to quaternary structure, probably interacts with PlsX.

The protein resides in the cell inner membrane. The catalysed reaction is an acyl phosphate + sn-glycerol 3-phosphate = a 1-acyl-sn-glycero-3-phosphate + phosphate. Its pathway is lipid metabolism; phospholipid metabolism. Its function is as follows. Catalyzes the transfer of an acyl group from acyl-phosphate (acyl-PO(4)) to glycerol-3-phosphate (G3P) to form lysophosphatidic acid (LPA). This enzyme utilizes acyl-phosphate as fatty acyl donor, but not acyl-CoA or acyl-ACP. In Laribacter hongkongensis (strain HLHK9), this protein is Glycerol-3-phosphate acyltransferase.